The primary structure comprises 468 residues: Ribulose bisphosphate carboxylase large chain (468 aa).

Lys7 bears the N6,N6,N6-trimethyllysine mark. Positions 116 and 166 each coordinate substrate. Lys168 functions as the Proton acceptor in the catalytic mechanism. Lys170 is a substrate binding site. 3 residues coordinate Mg(2+): Lys194, Asp196, and Glu197. Lys194 bears the N6-carboxylysine mark. The Proton acceptor role is filled by His287. Arg288, His320, and Ser372 together coordinate substrate.

Belongs to the RuBisCO large chain family. Type I subfamily. In terms of assembly, heterohexadecamer of 8 large chains and 8 small chains; disulfide-linked. The disulfide link is formed within the large subunit homodimers. The cofactor is Mg(2+). In terms of processing, the disulfide bond which can form in the large chain dimeric partners within the hexadecamer appears to be associated with oxidative stress and protein turnover.

It is found in the plastid. The protein resides in the chloroplast. It catalyses the reaction 2 (2R)-3-phosphoglycerate + 2 H(+) = D-ribulose 1,5-bisphosphate + CO2 + H2O. The enzyme catalyses D-ribulose 1,5-bisphosphate + O2 = 2-phosphoglycolate + (2R)-3-phosphoglycerate + 2 H(+). Its function is as follows. RuBisCO catalyzes two reactions: the carboxylation of D-ribulose 1,5-bisphosphate, the primary event in carbon dioxide fixation, as well as the oxidative fragmentation of the pentose substrate in the photorespiration process. Both reactions occur simultaneously and in competition at the same active site. The chain is Ribulose bisphosphate carboxylase large chain from Cornus alternifolia (Pagoda dogwood).